A 282-amino-acid chain; its full sequence is Dihydroorotate dehydrogenase B (NAD(+)), electron transfer subunit homolog (282 aa).

The FAD-binding FR-type domain maps to 2–100 (GGTALNEIVK…VGPLGNPSEI (99 aa)). [2Fe-2S] cluster is bound by residues Cys225, Cys228, and Cys240.

This sequence belongs to the PyrK family. The cofactor is [2Fe-2S] cluster. FAD serves as cofactor.

The chain is Dihydroorotate dehydrogenase B (NAD(+)), electron transfer subunit homolog from Thermotoga maritima (strain ATCC 43589 / DSM 3109 / JCM 10099 / NBRC 100826 / MSB8).